A 200-amino-acid chain; its full sequence is Holliday junction branch migration complex subunit RuvA (200 aa).

The interval 1–63 (MIGKLSGKID…EEHIHLYGFL (63 aa)) is domain I. Residues 64–142 (TLEEKNFFNL…KIFSSSAIIK (79 aa)) form a domain II region. Residues 142–146 (KDSSN) form a flexible linker region. Residues 147–200 (ISSVEINEVIKALVNLGFTRFEAQNTVQGIITQNTKISIDELIKTALKNRNSSF) form a domain III region.

It belongs to the RuvA family. As to quaternary structure, homotetramer. Forms an RuvA(8)-RuvB(12)-Holliday junction (HJ) complex. HJ DNA is sandwiched between 2 RuvA tetramers; dsDNA enters through RuvA and exits via RuvB. An RuvB hexamer assembles on each DNA strand where it exits the tetramer. Each RuvB hexamer is contacted by two RuvA subunits (via domain III) on 2 adjacent RuvB subunits; this complex drives branch migration. In the full resolvosome a probable DNA-RuvA(4)-RuvB(12)-RuvC(2) complex forms which resolves the HJ.

It is found in the cytoplasm. Its function is as follows. The RuvA-RuvB-RuvC complex processes Holliday junction (HJ) DNA during genetic recombination and DNA repair, while the RuvA-RuvB complex plays an important role in the rescue of blocked DNA replication forks via replication fork reversal (RFR). RuvA specifically binds to HJ cruciform DNA, conferring on it an open structure. The RuvB hexamer acts as an ATP-dependent pump, pulling dsDNA into and through the RuvAB complex. HJ branch migration allows RuvC to scan DNA until it finds its consensus sequence, where it cleaves and resolves the cruciform DNA. In Rickettsia typhi (strain ATCC VR-144 / Wilmington), this protein is Holliday junction branch migration complex subunit RuvA.